Consider the following 311-residue polypeptide: Phosphoribosylamine--glycine ligase (311 aa).

Residues 1-191 (DPRVRKQYIQ…LVQVLLAACR (191 aa)) form the ATP-grasp domain.

It belongs to the GARS family.

It localises to the plastid. Its subcellular location is the chloroplast. The catalysed reaction is 5-phospho-beta-D-ribosylamine + glycine + ATP = N(1)-(5-phospho-beta-D-ribosyl)glycinamide + ADP + phosphate + H(+). Its pathway is purine metabolism; IMP biosynthesis via de novo pathway; N(1)-(5-phospho-D-ribosyl)glycinamide from 5-phospho-alpha-D-ribose 1-diphosphate: step 2/2. The sequence is that of Phosphoribosylamine--glycine ligase (PUR2) from Vigna unguiculata (Cowpea).